The sequence spans 135 residues: Sex-regulated protein janus-A (135 aa).

Residue K37 coordinates substrate. The Proton acceptor role is filled by H63. 104–106 is a binding site for substrate; sequence SQG.

The protein belongs to the janus family.

Its function is as follows. JanA and janB regulate somatic sex differentiation. The chain is Sex-regulated protein janus-A (janA) from Drosophila yakuba (Fruit fly).